Reading from the N-terminus, the 53-residue chain is Lantibiotic mutacin-2 (53 aa).

A propeptide spanning residues 1–26 is cleaved from the precursor; the sequence is MNKLNSNAVVSLNEVSDSELDTILGG. Positions 36–41 form a cross-link, beta-methyllanthionine (Thr-Cys); sequence TVSYEC. 2 cross-links (lanthionine (Ser-Cys)) span residues 38–52 and 45–53; these read SYEC…VFTC and SWQHVFTCC. Thr-51 is subject to 2,3-didehydrobutyrine.

In terms of processing, maturation of lantibiotics involves the enzymatic conversion of Thr, and Ser into dehydrated AA and the formation of thioether bonds with cysteine. This is followed by membrane translocation and cleavage of the modified precursor. It is not established whether the 2,3-didehydrobutyrine is the E- or Z-isomer.

In terms of biological role, lanthionine-containing peptide antibiotic (lantibiotic) active on Gram-positive bacteria including M.luteus, S.aureus, Streptococcus, P.micros, P.acidilactici, C.sporogenes, C.diphtheriae, A.viscosus, G.vaginalis, P.acnes, L.monocytogenes and M.smegmatis, and Gram-negative bacteria including C.jejuni, H.pylori and N.gonorrhoeae. Transiently and partially depolarizes the transmembrane electrical potential and pH gradient of susceptible cells, inhibits the uptake of amino acids and depletes the intracellular ATP pool. In Streptococcus mutans, this protein is Lantibiotic mutacin-2.